A 706-amino-acid chain; its full sequence is Vitamin B12-dependent ribonucleoside-diphosphate reductase (706 aa).

The ATP-cone domain maps to 21-109 (AKVRRRDGTL…IYRQRRAELR (89 aa)). Residues Ser191, 206–207 (GC), Gly235, 389–393 (NPCGE), and 534–538 (PTGTI) contribute to the substrate site. A disulfide bridge links Cys207 with Cys402. Asn389 serves as the catalytic Proton acceptor. Cys391 serves as the catalytic Cysteine radical intermediate. Catalysis depends on Glu393, which acts as the Proton acceptor.

The protein belongs to the ribonucleoside diphosphate reductase class-2 family. Requires adenosylcob(III)alamin as cofactor.

It catalyses the reaction a 2'-deoxyribonucleoside 5'-diphosphate + [thioredoxin]-disulfide + H2O = a ribonucleoside 5'-diphosphate + [thioredoxin]-dithiol. Its function is as follows. Provides the precursors necessary for DNA synthesis. Catalyzes the biosynthesis of deoxyribonucleotides from the corresponding ribonucleotides. This chain is Vitamin B12-dependent ribonucleoside-diphosphate reductase (nrdZ), found in Mycobacterium tuberculosis (strain ATCC 25618 / H37Rv).